The following is a 67-amino-acid chain: Bowman-Birk type proteinase inhibitor A4 (67 aa).

4 disulfide bridges follow: cysteine 10-cysteine 29, cysteine 16-cysteine 27, cysteine 36-cysteine 43, and cysteine 40-cysteine 57.

The protein belongs to the Bowman-Birk serine protease inhibitor family. Expressed in bulb (at protein level).

In terms of biological role, serine protease inhibitor. Inhibits trypsin (Ki=12nM) and weakly inhibits chymotrypsin with (Ki=460nm). Does not inhibit bacterial subtilisin. This is Bowman-Birk type proteinase inhibitor A4 from Hyacinthus orientalis (Common hyacinth).